We begin with the raw amino-acid sequence, 257 residues long: 5'-nucleotidase SurE (257 aa).

A divalent metal cation-binding residues include aspartate 8, aspartate 9, serine 39, and asparagine 87. A disordered region spans residues 234 to 257; the sequence is VSPLTAPHPTTGHEGLAGLAEKYQ.

It belongs to the SurE nucleotidase family. A divalent metal cation is required as a cofactor.

The protein localises to the cytoplasm. It carries out the reaction a ribonucleoside 5'-phosphate + H2O = a ribonucleoside + phosphate. Functionally, nucleotidase that shows phosphatase activity on nucleoside 5'-monophosphates. This Natronomonas pharaonis (strain ATCC 35678 / DSM 2160 / CIP 103997 / JCM 8858 / NBRC 14720 / NCIMB 2260 / Gabara) (Halobacterium pharaonis) protein is 5'-nucleotidase SurE.